The following is a 600-amino-acid chain: Chaperone protein DnaK (600 aa).

Thr175 is modified (phosphothreonine; by autocatalysis). Positions 569-578 are enriched in low complexity; the sequence is SFAQATAQQA. Positions 569-600 are disordered; it reads SFAQATAQQANTSESDPKADDSNTIDAEIKQD. Residues 583-600 show a composition bias toward basic and acidic residues; the sequence is SDPKADDSNTIDAEIKQD.

The protein belongs to the heat shock protein 70 family.

Acts as a chaperone. In Mesomycoplasma hyopneumoniae (strain J / ATCC 25934 / NCTC 10110) (Mycoplasma hyopneumoniae), this protein is Chaperone protein DnaK.